The primary structure comprises 189 residues: Bilin-binding protein (189 aa).

The N-terminal stretch at 1-15 (MQYLIVLALVAAASA) is a signal peptide. Disulfide bonds link Cys23–Cys130 and Cys57–Cys185.

It belongs to the calycin superfamily. Lipocalin family. As to quaternary structure, homotetramer. As to expression, hemolymph.

It localises to the secreted. Its function is as follows. This protein binds the blue pigments bilins. The polypeptide is Bilin-binding protein (Pieris brassicae (White butterfly)).